We begin with the raw amino-acid sequence, 850 residues long: Endoribonuclease ysh-1 (850 aa).

H83, H85, D87, H88, H173, and D194 together coordinate Zn(2+). The active-site Proton donor is the H442. H464 is a binding site for Zn(2+). Disordered stretches follow at residues 685–708 and 732–784; these read VKRS…PHSH and SPIV…EQQL. The segment covering 744 to 754 has biased composition (polar residues); sequence PTTKAITSPSE. Residues 755–766 are compositionally biased toward basic and acidic residues; that stretch reads ETAKSSDVKSDA. A compositionally biased stretch (acidic residues) spans 767–781; it reads DADASMDVSEEDEDE.

The protein belongs to the metallo-beta-lactamase superfamily. RNA-metabolizing metallo-beta-lactamase-like family. CPSF2/YSH1 subfamily.

It localises to the nucleus. Functionally, component of the cleavage factor I (CF I) involved in pre-mRNA 3'-end processing. In Neurospora crassa (strain ATCC 24698 / 74-OR23-1A / CBS 708.71 / DSM 1257 / FGSC 987), this protein is Endoribonuclease ysh-1 (ysh-1).